The following is a 225-amino-acid chain: MHTTQKDTTYTKIFVGGLPYHTTDSSLRKYFEVFGDIEEAVVITDRQTGKSRGYGFVTMADRAAAERACKDPNPIIDGRKANVNLAYLGAKPRIMQPGFAFGVQQLHPALIQRPFGIPAHYVYPQAFVQPGVVIPHVQPAAAAASTTPYIGYTGAAYAQYSAAAAAYEQYPYAASPAAAAGYVAAGGYGYAVQQPITAAAPGTAAAAAAAFGQYQPQQLQTDRMQ.

Residues 11-88 form the RRM domain; that stretch reads TKIFVGGLPY…RKANVNLAYL (78 aa).

It is found in the nucleus. Its subcellular location is the cytoplasm. Multifunctional RNA-binding protein involved in the regulation of pre-mRNA splicing, mRNA stability and mRNA translation important for cell fate decision and differentiation. Plays a major role in pre-mRNA alternative splicing regulation. Mediates preferentially muscle-specific exon inclusion in numerous mRNAs important for striated cardiac and skeletal muscle cell differentiation. Binds to intronic splicing enhancer (ISE) composed of stretches of GU-rich motifs localized in flanking intron of exon that will be included by alternative splicing. Involved in embryonic stem cell (ESC) transition to cardiac cell differentiation by promoting pre-mRNA alternative splicing events of several pluripotency and/or differentiation genes. Plays a role in the regulation of mRNA stability and mRNA translation to which it is bound. Involved in myogenic differentiation by regulating MYOG levels. Binds to a huge amount of mRNAs. Involved in embryonic heart development and myogenic differentiation of somitic muscle progenitors. The chain is RNA-binding protein 24 from Gallus gallus (Chicken).